The primary structure comprises 353 residues: Ribosomal RNA small subunit methyltransferase H (353 aa).

Residues 39-41, Asp-58, Phe-90, Asp-108, and Gln-115 each bind S-adenosyl-L-methionine; that span reads AGH. The interval 334–353 is disordered; sequence SEDGVRGAHGHRRRTQARRG. The segment covering 341-353 has biased composition (basic residues); that stretch reads AHGHRRRTQARRG.

It belongs to the methyltransferase superfamily. RsmH family.

It is found in the cytoplasm. It carries out the reaction cytidine(1402) in 16S rRNA + S-adenosyl-L-methionine = N(4)-methylcytidine(1402) in 16S rRNA + S-adenosyl-L-homocysteine + H(+). In terms of biological role, specifically methylates the N4 position of cytidine in position 1402 (C1402) of 16S rRNA. The chain is Ribosomal RNA small subunit methyltransferase H from Bifidobacterium animalis subsp. lactis (strain AD011).